Here is a 178-residue protein sequence, read N- to C-terminus: Cytochrome b6-f complex iron-sulfur subunit (178 aa).

Residues 20–42 form a helical membrane-spanning segment; sequence LLTFGSVTGVALGSLYPVVKYFI. The Rieske domain maps to 68-161; the sequence is WLANHSDGDR…IAVENDNVFV (94 aa). Cys-107, His-109, Cys-125, and His-128 together coordinate [2Fe-2S] cluster. A disulfide bond links Cys-112 and Cys-127.

Belongs to the Rieske iron-sulfur protein family. As to quaternary structure, the 4 large subunits of the cytochrome b6-f complex are cytochrome b6, subunit IV (17 kDa polypeptide, PetD), cytochrome f and the Rieske protein, while the 4 small subunits are PetG, PetL, PetM and PetN. The complex functions as a dimer. Requires [2Fe-2S] cluster as cofactor.

The protein resides in the cellular thylakoid membrane. It catalyses the reaction 2 oxidized [plastocyanin] + a plastoquinol + 2 H(+)(in) = 2 reduced [plastocyanin] + a plastoquinone + 4 H(+)(out). Component of the cytochrome b6-f complex, which mediates electron transfer between photosystem II (PSII) and photosystem I (PSI), cyclic electron flow around PSI, and state transitions. The polypeptide is Cytochrome b6-f complex iron-sulfur subunit (Prochlorococcus marinus (strain MIT 9303)).